The sequence spans 723 residues: Threonine--tRNA ligase, mitochondrial (723 aa).

Ser57 is subject to Phosphoserine. Residues 64–126 enclose the TGS domain; the sequence is RTIKISLPEG…ETDCHLRFLT (63 aa).

Belongs to the class-II aminoacyl-tRNA synthetase family. In terms of assembly, homodimer.

The protein localises to the mitochondrion matrix. It catalyses the reaction tRNA(Thr) + L-threonine + ATP = L-threonyl-tRNA(Thr) + AMP + diphosphate + H(+). Catalyzes the attachment of threonine to tRNA(Thr) in a two-step reaction: threonine is first activated by ATP to form Thr-AMP and then transferred to the acceptor end of tRNA(Thr). Also edits incorrectly charged tRNA(Thr) via its editing domain. This Rattus norvegicus (Rat) protein is Threonine--tRNA ligase, mitochondrial (Tars2).